The following is a 131-amino-acid chain: Small ribosomal subunit protein uS8 (131 aa).

The protein belongs to the universal ribosomal protein uS8 family. In terms of assembly, part of the 30S ribosomal subunit. Contacts proteins S5 and S12.

Its function is as follows. One of the primary rRNA binding proteins, it binds directly to 16S rRNA central domain where it helps coordinate assembly of the platform of the 30S subunit. The chain is Small ribosomal subunit protein uS8 from Thiobacillus denitrificans (strain ATCC 25259 / T1).